The chain runs to 105 residues: MAKVHVRKKDTVMIISGKDKGKTGEVLAVMPKVSKVLVSGINIVSKHQKPNKQNMEGGIIRKEAAIYSSKVMLYCEKCKSVTRISHKILEDGTKVRVCKKCGETL.

Belongs to the universal ribosomal protein uL24 family. As to quaternary structure, part of the 50S ribosomal subunit.

Its function is as follows. One of two assembly initiator proteins, it binds directly to the 5'-end of the 23S rRNA, where it nucleates assembly of the 50S subunit. One of the proteins that surrounds the polypeptide exit tunnel on the outside of the subunit. This is Large ribosomal subunit protein uL24 from Clostridium kluyveri (strain ATCC 8527 / DSM 555 / NBRC 12016 / NCIMB 10680 / K1).